A 497-amino-acid chain; its full sequence is Probable cytosol aminopeptidase (497 aa).

Mn(2+) is bound by residues Lys-267 and Asp-272. Lys-279 is a catalytic residue. Mn(2+)-binding residues include Asp-290, Asp-349, and Glu-351. Residue Arg-353 is part of the active site.

This sequence belongs to the peptidase M17 family. It depends on Mn(2+) as a cofactor.

The protein localises to the cytoplasm. It catalyses the reaction Release of an N-terminal amino acid, Xaa-|-Yaa-, in which Xaa is preferably Leu, but may be other amino acids including Pro although not Arg or Lys, and Yaa may be Pro. Amino acid amides and methyl esters are also readily hydrolyzed, but rates on arylamides are exceedingly low.. The catalysed reaction is Release of an N-terminal amino acid, preferentially leucine, but not glutamic or aspartic acids.. Presumably involved in the processing and regular turnover of intracellular proteins. Catalyzes the removal of unsubstituted N-terminal amino acids from various peptides. The protein is Probable cytosol aminopeptidase of Pseudomonas putida (strain GB-1).